A 618-amino-acid polypeptide reads, in one-letter code: Protein polyglycylase TTLL10 (618 aa).

The interval 1-76 is disordered; sequence MGSSQEEGLP…GLLLGDGKPS (76 aa). Low complexity predominate over residues 57–74; sequence ATGPPAALLEGLLLGDGK. The region spanning 82–479 is the TTL domain; sequence PGPFFYIGGN…TFQKSLRGQK (398 aa). Residues Lys240, 246–247, 289–292, 302–304, and 345–346 contribute to the ATP site; these read QG, QRYI, KFD, and TN. An a protein-binding site is contributed by Gln246. Mg(2+)-binding residues include Asp425, Glu438, and Asn440. The interval 503–618 is disordered; the sequence is LGGSCSLRRR…PATLPAFRDL (116 aa). A compositionally biased stretch (pro residues) spans 539–557; that stretch reads PVPPPLAPQRPQLPGPSPD. Residues 585-594 show a composition bias toward basic and acidic residues; it reads AKEEREEPEN.

Requires Mg(2+) as cofactor.

The protein localises to the cytoplasm. Its subcellular location is the cytoskeleton. It is found in the cell projection. It localises to the cilium. The protein resides in the cilium axoneme. It catalyses the reaction (glycyl)(n)-glycyl-L-glutamyl-[protein] + glycine + ATP = (glycyl)(n+1)-glycyl-L-glutamyl-[protein] + ADP + phosphate + H(+). In terms of biological role, polyglycylase which modifies both tubulin and non-tubulin proteins, generating polyglycine side chains of variable lengths on the gamma-carboxyl groups of specific glutamate residues of target proteins. Involved in the elongation step rather than the initiation step of the polyglycylation reaction. Polyglycylates alpha-tubulin and beta-tubulin. Polyglycylates non-tubulin proteins such as nucleosome assembly protein NAP1. The sequence is that of Protein polyglycylase TTLL10 (TTLL10) from Macaca fascicularis (Crab-eating macaque).